We begin with the raw amino-acid sequence, 142 residues long: UPF0179 protein PYRAB06360 (142 aa).

Belongs to the UPF0179 family.

This is UPF0179 protein PYRAB06360 from Pyrococcus abyssi (strain GE5 / Orsay).